Consider the following 688-residue polypeptide: DNA ligase (688 aa).

Residues 38–42 (DEEYD), 87–88 (SL), and Glu-118 contribute to the NAD(+) site. Lys-120 acts as the N6-AMP-lysine intermediate in catalysis. NAD(+)-binding residues include Arg-141, Glu-175, Lys-291, and Lys-315. Cys-409, Cys-412, Cys-428, and Cys-433 together coordinate Zn(2+). In terms of domain architecture, BRCT spans 590–679 (MKLDILKGLT…AELKGYNFDE (90 aa)).

Belongs to the NAD-dependent DNA ligase family. LigA subfamily. Mg(2+) is required as a cofactor. The cofactor is Mn(2+).

It catalyses the reaction NAD(+) + (deoxyribonucleotide)n-3'-hydroxyl + 5'-phospho-(deoxyribonucleotide)m = (deoxyribonucleotide)n+m + AMP + beta-nicotinamide D-nucleotide.. In terms of biological role, DNA ligase that catalyzes the formation of phosphodiester linkages between 5'-phosphoryl and 3'-hydroxyl groups in double-stranded DNA using NAD as a coenzyme and as the energy source for the reaction. It is essential for DNA replication and repair of damaged DNA. The sequence is that of DNA ligase from Thermotoga petrophila (strain ATCC BAA-488 / DSM 13995 / JCM 10881 / RKU-1).